Consider the following 70-residue polypeptide: Brevinin-1MT2 (70 aa).

An N-terminal signal peptide occupies residues 1–22 (MFTLKKSMLLLFFLGTINLSLC). A propeptide spanning residues 23–44 (EQERNADEEERRDDDEMDVEVE) is cleaved from the precursor. A disulfide bridge links cysteine 64 with cysteine 70.

Belongs to the frog skin active peptide (FSAP) family. Brevinin subfamily. Expressed by the skin glands.

The protein localises to the secreted. Antimicrobial peptide with activity against a variety of Gram-negative and Gram-positive bacteria and against fungi. Shows strong hemolytic activity against human erythrocytes. The polypeptide is Brevinin-1MT2 (Amolops mantzorum (Sichuan torrent frog)).